The primary structure comprises 118 residues: BLOC-1-related complex subunit 8 (118 aa).

The segment covering 98-107 (KEQISNSQGR) has biased composition (polar residues). The interval 98-118 (KEQISNSQGRSPHVSAPSASS) is disordered.

This sequence belongs to the BORCS8 family.

It localises to the lysosome membrane. Its function is as follows. As part of a BORC-like complex, it may play a role in the movement and localization of lysosomes at the cell periphery. Associated with the cytosolic face of lysosomes, this complex may couple lysosomes to microtubule plus-end-directed kinesin motors, driving lysosome movement toward the cell periphery. This Tetraodon nigroviridis (Spotted green pufferfish) protein is BLOC-1-related complex subunit 8.